Here is a 223-residue protein sequence, read N- to C-terminus: Flagellar L-ring protein 2 (223 aa).

Residues 1–17 (MKWLSKSWAVAVVLLVG) form the signal peptide. Cys-18 carries N-palmitoyl cysteine lipidation. Residue Cys-18 is the site of S-diacylglycerol cysteine attachment.

This sequence belongs to the FlgH family. In terms of assembly, the basal body constitutes a major portion of the flagellar organelle and consists of four rings (L,P,S, and M) mounted on a central rod.

It localises to the cell outer membrane. It is found in the bacterial flagellum basal body. Functionally, assembles around the rod to form the L-ring and probably protects the motor/basal body from shearing forces during rotation. The chain is Flagellar L-ring protein 2 from Vibrio parahaemolyticus serotype O3:K6 (strain RIMD 2210633).